The sequence spans 503 residues: Maturase K (503 aa).

The protein belongs to the intron maturase 2 family. MatK subfamily.

The protein resides in the plastid. It is found in the chloroplast. Functionally, usually encoded in the trnK tRNA gene intron. Probably assists in splicing its own and other chloroplast group II introns. The protein is Maturase K of Backhousia subargentea (Giant ironwood).